Reading from the N-terminus, the 121-residue chain is Basic phospholipase A2 homolog BnSP-7 (121 aa).

7 disulfides stabilise this stretch: Cys26–Cys115, Cys28–Cys44, Cys43–Cys95, Cys49–Cys121, Cys50–Cys88, Cys57–Cys81, and Cys75–Cys86. The important for membrane-damaging activities in eukaryotes and bacteria; heparin-binding stretch occupies residues 105 to 117; that stretch reads KKYRYHLKPFCKK.

This sequence belongs to the phospholipase A2 family. Group II subfamily. K49 sub-subfamily. Homodimer; non-covalently linked (probable alternative/compact dimer conformation in solution). Expressed by the venom gland.

The protein resides in the secreted. Its activity is regulated as follows. Heparin inhibits the neuromuscular effect, myotoxin activity and edema-inducing effects. Bromophenacyl bromide (BPB) inhibits the neuromuscular effect, the myotoxin activity and edema-inducing effects. Its function is as follows. Snake venom phospholipase A2 (PLA2) that lacks enzymatic activity. Is myotoxic and displays edema-inducing activity. Displays bactericidal activity and promotes the blockage of the neuromuscular contraction of the chick biventer cervicis muscle. Also disrupts artificial membranes, and provokes tissue damages characterized by edema, necrosis and inflammation. May act as pro-inflammatory mediators, inducing metalloproteinase and cytokine production from the inflammatory and satellite cells. A model of myotoxic mechanism has been proposed: an apo Lys49-PLA2 is activated by the entrance of a hydrophobic molecule (e.g. fatty acid) at the hydrophobic channel of the protein leading to a reorientation of a monomer. This reorientation causes a transition between 'inactive' to 'active' states, causing alignment of C-terminal and membrane-docking sites (MDoS) side-by-side and putting the membrane-disruption sites (MDiS) in the same plane, exposed to solvent and in a symmetric position for both monomers. The MDoS region stabilizes the toxin on membrane by the interaction of charged residues with phospholipid head groups. Subsequently, the MDiS region destabilizes the membrane with penetration of hydrophobic residues. This insertion causes a disorganization of the membrane, allowing an uncontrolled influx of ions (i.e. calcium and sodium), and eventually triggering irreversible intracellular alterations and cell death. The protein is Basic phospholipase A2 homolog BnSP-7 of Bothrops pauloensis (Neuwied's lancehead).